The sequence spans 250 residues: ATP synthase subunit a (250 aa).

A run of 6 helical transmembrane segments spans residues 29-49, 84-104, 114-134, 143-163, 189-209, and 216-236; these read ASLF…FATS, FFPM…LGMM, IVVT…YGFY, LFVP…IEVI, VFAG…GGAL, and VALT…FAVL.

The protein belongs to the ATPase A chain family. As to quaternary structure, F-type ATPases have 2 components, CF(1) - the catalytic core - and CF(0) - the membrane proton channel. CF(1) has five subunits: alpha(3), beta(3), gamma(1), delta(1), epsilon(1). CF(0) has three main subunits: a(1), b(2) and c(9-12). The alpha and beta chains form an alternating ring which encloses part of the gamma chain. CF(1) is attached to CF(0) by a central stalk formed by the gamma and epsilon chains, while a peripheral stalk is formed by the delta and b chains.

The protein localises to the cell inner membrane. Key component of the proton channel; it plays a direct role in the translocation of protons across the membrane. The sequence is that of ATP synthase subunit a from Allorhizobium ampelinum (strain ATCC BAA-846 / DSM 112012 / S4) (Agrobacterium vitis (strain S4)).